Consider the following 402-residue polypeptide: Putative cystathionine beta-lyase (402 aa).

Lys236 carries the N6-(pyridoxal phosphate)lysine modification.

This sequence belongs to the class-II pyridoxal-phosphate-dependent aminotransferase family. MalY/PatB cystathionine beta-lyase subfamily. Pyridoxal 5'-phosphate serves as cofactor.

It catalyses the reaction L,L-cystathionine + H2O = L-homocysteine + pyruvate + NH4(+). The enzyme catalyses an S-substituted L-cysteine + H2O = a thiol + pyruvate + NH4(+). It participates in amino-acid biosynthesis; L-methionine biosynthesis via de novo pathway; L-homocysteine from L-cystathionine: step 1/1. The sequence is that of Putative cystathionine beta-lyase from Mycobacterium leprae (strain TN).